The chain runs to 241 residues: Zinc finger CCHC domain-containing protein 24 (241 aa).

Phosphoserine is present on residues Ser-65 and Ser-93. The CCHC-type zinc-finger motif lies at Tyr-132–Gln-149.

This is Zinc finger CCHC domain-containing protein 24 from Mus musculus (Mouse).